We begin with the raw amino-acid sequence, 445 residues long: MTTILKSLPKGEKVGIAFSGGLDTSAALLWMKQKGARCYAYTANLGQPDEADYNEIPRKAQEFGAEKAVLVDCRTQLVHEGIAAIQSGAFHISTGGITYFNTTPLGRAVTGTMLVAAMKEDGVNIWGDGSTFKGNDIERFYRYGLLTNPSLRIYKPWLDQQFIDELGGRAEMSAFMTAQGFAYKMSAEKAYSTDSNLLGATHEAKDLESLDSGIKIVNPIMGVPFWREDCNVKAEKVVVRFEEGQPTALNGQTFTDPVALFLEANAIGGRHGLGMSDQIENRIIEAKSRGIYEAPGMALLHIAYERLVTGIHNEDTIEQYRISGMRLGRLLYQGRWFDSQALMLRETAQRWVARAVTGEVTLELRRGNDYSILNTESPNLTYAPERLSMEKVEDAAFTPADRIGQLTMRNLDIADTRTKLKLYTDTGLLSGSEGSQIFRLENDKG.

ATP is bound by residues 17–25 and A43; that span reads AFSGGLDTS. Y99 is an L-citrulline binding site. ATP contacts are provided by G129 and T131. T131, N135, and D136 together coordinate L-aspartate. N135 provides a ligand contact to L-citrulline. D136 provides a ligand contact to ATP. L-citrulline is bound by residues R139 and S192. D194 provides a ligand contact to ATP. Residues T201, E203, and E280 each coordinate L-citrulline.

Belongs to the argininosuccinate synthase family. Type 2 subfamily. In terms of assembly, homotetramer.

It localises to the cytoplasm. It catalyses the reaction L-citrulline + L-aspartate + ATP = 2-(N(omega)-L-arginino)succinate + AMP + diphosphate + H(+). It functions in the pathway amino-acid biosynthesis; L-arginine biosynthesis; L-arginine from L-ornithine and carbamoyl phosphate: step 2/3. This chain is Argininosuccinate synthase (argG), found in Bradyrhizobium diazoefficiens (strain JCM 10833 / BCRC 13528 / IAM 13628 / NBRC 14792 / USDA 110).